We begin with the raw amino-acid sequence, 291 residues long: Verruculogen synthase (291 aa).

The protein belongs to the PhyH family. In terms of assembly, homodimer. Fe cation is required as a cofactor.

The catalysed reaction is fumitremorgin B + 2-oxoglutarate + AH2 + 2 O2 = verruculogen + succinate + A + CO2 + H2O. It functions in the pathway mycotoxin biosynthesis. Verruculogen synthase; part of the gene cluster that mediates the biosynthesis of fumitremorgins, indole alkaloids that carry not only intriguing chemical structures, but also interesting biological and pharmacological activities. The biosynthesis of fumitremorgin-type alkaloids begins by condensation of the two amino acids L-tryptophan and L-proline to brevianamide F, catalyzed by the non-ribosomal peptide synthetase ftmPS/ftmA. Brevianamide F is then prenylated by the prenyltransferase ftmPT1/ftmB in the presence of dimethylallyl diphosphate, resulting in the formation of tryprostatin B. The three cytochrome P450 monooxygenases, ftmP450-1/ftmC, ftmP450-2/ftmE and ftmP450-3/FtmG, are responsible for the conversion of tryprostatin B to 6-hydroxytryprostatin B, tryprostatin A to fumitremorgin C and fumitremorgin C to 12,13-dihydroxyfumitremorgin C, respectively. The putative methyltransferase ftmMT/ftmD is expected for the conversion of 6-hydroxytryprostatin B to tryprostatin A. FtmPT2/FtmH catalyzes the prenylation of 12,13-dihydroxyfumitre-morgin C in the presence of dimethylallyl diphosphate, resulting in the formation of fumitremorgin B. Fumitremorgin B is further converted to verruculogen by ftmOx1/ftmF via the insertion of an endoperoxide bond between the two prenyl moieties. Finally, verruculogen is further converted to fumitremorgin A by the verruculogen prenyltransferase ftmPT3. The protein is Verruculogen synthase of Neosartorya fischeri (strain ATCC 1020 / DSM 3700 / CBS 544.65 / FGSC A1164 / JCM 1740 / NRRL 181 / WB 181) (Aspergillus fischerianus).